Consider the following 338-residue polypeptide: S-adenosylmethionine:tRNA ribosyltransferase-isomerase (338 aa).

The protein belongs to the QueA family. In terms of assembly, monomer.

Its subcellular location is the cytoplasm. It catalyses the reaction 7-aminomethyl-7-carbaguanosine(34) in tRNA + S-adenosyl-L-methionine = epoxyqueuosine(34) in tRNA + adenine + L-methionine + 2 H(+). It functions in the pathway tRNA modification; tRNA-queuosine biosynthesis. Transfers and isomerizes the ribose moiety from AdoMet to the 7-aminomethyl group of 7-deazaguanine (preQ1-tRNA) to give epoxyqueuosine (oQ-tRNA). The polypeptide is S-adenosylmethionine:tRNA ribosyltransferase-isomerase (Francisella tularensis subsp. holarctica (strain FTNF002-00 / FTA)).